Reading from the N-terminus, the 436-residue chain is Gamma-glutamyl phosphate reductase (436 aa).

Belongs to the gamma-glutamyl phosphate reductase family.

Its subcellular location is the cytoplasm. The enzyme catalyses L-glutamate 5-semialdehyde + phosphate + NADP(+) = L-glutamyl 5-phosphate + NADPH + H(+). It functions in the pathway amino-acid biosynthesis; L-proline biosynthesis; L-glutamate 5-semialdehyde from L-glutamate: step 2/2. Functionally, catalyzes the NADPH-dependent reduction of L-glutamate 5-phosphate into L-glutamate 5-semialdehyde and phosphate. The product spontaneously undergoes cyclization to form 1-pyrroline-5-carboxylate. This Prochlorococcus marinus subsp. pastoris (strain CCMP1986 / NIES-2087 / MED4) protein is Gamma-glutamyl phosphate reductase.